The chain runs to 1098 residues: NACHT, LRR and PYD domains-containing protein 5 (1098 aa).

The region spanning 1-97 is the Pyrin domain; that stretch reads MREAKIAPLS…SEMARDEMKK (97 aa). A disordered region spans residues 104 to 131; that stretch reads SEDSAPTKTDQGPSMKEVPGPREDPQDS. The segment covering 122–131 has biased composition (basic and acidic residues); sequence PGPREDPQDS. An NACHT domain is found at 180-503; the sequence is LTVVLHGPPG…ALFYVLRGVE (324 aa). Position 186–193 (186–193) interacts with ATP; that stretch reads GPPGVGKS. 7 LRR repeats span residues 851 to 871, 880 to 900, 908 to 928, 937 to 958, 965 to 985, 993 to 1013, and 1021 to 1041; these read GLTHLSLSGDELGSKGMSLLC, GLQKLALNACSLDVAGCGFLA, HLTHLSLSMNPLEDPGMNLLC, PLRDLDLVNCRLTASCCKSLSN, RLRSLDLAANALGDEGIAALC, TLTRLGLEACGLTSEGCKALS, and HLASLNLMRNDLGPRGMTTLC.

This sequence belongs to the NLRP family. In terms of assembly, component of the subcortical maternal complex (SCMC), at least composed of NLRP5, KHDC3, OOEP, and TLE6. Within the complex, interacts with OOEP, KHDC3 and TLE6. The SCMC may facilitate translocation of its components between the nuclear and cytoplasmic compartments. As part of the SCMC interacts with the SCMC-associated protein ZBED3. As part of the SCMC interacts with the SCMC-associated protein CFL1/Cofilin-1. Interacts with PRKCE. Interacts with TUBB3 at cytoskeleton microtubules. Post-translationally, phosphorylated by PRKCE. As to expression, oocyte-specific.

It is found in the cytoplasm. The protein localises to the cytoplasmic vesicle. Its subcellular location is the secretory vesicle. It localises to the cortical granule. The protein resides in the mitochondrion. It is found in the nucleus. The protein localises to the nucleolus. Its subcellular location is the golgi apparatus. Component of the subcortical maternal complex (SCMC), a multiprotein complex that plays a key role in early embryonic development. The SCMC complex is a structural constituent of cytoplasmic lattices, which consist in fibrous structures found in the cytoplasm of oocytes and preimplantation embryos. They are required to store maternal proteins critical for embryonic development, such as proteins that control epigenetic reprogramming of the preimplantation embryo, and prevent their degradation or activation. Required for the localization of cortical granules to the cortex of oocytes, via association with the cortical actin scaffold. Required for cortical actin clearance prior to oocyte exocytosis and prevention of polyspermy. Involved in regulating post-fertilization Ca(2+) release and endoplasmic reticulum storage (ER) storage via regulation of cellular localization. May be involved in the localization of mitochondria to the cytoplasm and perinuclear region in oocytes and early stage embryos, independent of its role in CPL formation. The polypeptide is NACHT, LRR and PYD domains-containing protein 5 (NLRP5) (Bos taurus (Bovine)).